The following is a 216-amino-acid chain: MSSRKILPTKLNLINLRKQIRLTRTIKRLLENKREVLLIYLREYANEYEKLYSEVSQLLKEVYETYLMGVSAEGISTVESYANSVPPSLQVKSDLKVLFGVRIPIVKLDENSIQPQPFGDIEVSPYITKSRDAIAEAFKKILELVEMESAIRSLSTELRKTQRLINAIDSYILPYYTSSAKYIKGVLDDRTREEFVRLKMIRKVLQRRRGENVGNR.

Belongs to the V-ATPase D subunit family. In terms of assembly, has multiple subunits with at least A(3), B(3), C, D, E, F, H, I and proteolipid K(x). Post-translationally, the N-terminus is blocked.

The protein resides in the cell membrane. Functionally, component of the A-type ATP synthase that produces ATP from ADP in the presence of a proton gradient across the membrane. In Sulfurisphaera tokodaii (strain DSM 16993 / JCM 10545 / NBRC 100140 / 7) (Sulfolobus tokodaii), this protein is A-type ATP synthase subunit D.